Consider the following 49-residue polypeptide: Osteocalcin (49 aa).

Residues 1–47 form the Gla domain; that stretch reads YLDSGLGAPVPYPDPLEPKREVCELNPNCDELADHIGFQEAYQRFYG. Ca(2+)-binding residues include E17, E21, E24, and D30. 4-carboxyglutamate is present on residues E17, E21, and E24. C23 and C29 are disulfide-bonded.

It belongs to the osteocalcin/matrix Gla protein family. In terms of processing, gamma-carboxyglutamate residues are formed by vitamin K dependent carboxylation by GGCX. These residues are essential for the binding of calcium. Decarboxylation promotes the hormone activity.

It localises to the secreted. Functionally, the carboxylated form is one of the main organic components of the bone matrix, which constitutes 1-2% of the total bone protein. It acts as a negative regulator of bone formation and is required to limit bone formation without impairing bone resorption or mineralization. The carboxylated form binds strongly to apatite and calcium. The uncarboxylated form acts as a hormone secreted by osteoblasts, which regulates different cellular processes, such as energy metabolism, male fertility and brain development. Regulates of energy metabolism by acting as a hormone favoring pancreatic beta-cell proliferation, insulin secretion and sensitivity and energy expenditure. Uncarboxylated osteocalcin hormone also promotes testosterone production in the testes: acts as a ligand for G protein-coupled receptor GPRC6A at the surface of Leydig cells, initiating a signaling response that promotes the expression of enzymes required for testosterone synthesis in a CREB-dependent manner. Also acts as a regulator of brain development: osteocalcin hormone crosses the blood-brain barrier and acts as a ligand for GPR158 on neurons, initiating a signaling response that prevents neuronal apoptosis in the hippocampus, favors the synthesis of all monoamine neurotransmitters and inhibits that of gamma-aminobutyric acid (GABA). Osteocalcin also crosses the placenta during pregnancy and maternal osteocalcin is required for fetal brain development. The sequence is that of Osteocalcin (BGLAP) from Canis lupus familiaris (Dog).